The chain runs to 491 residues: Glutamyl-tRNA(Gln) amidotransferase subunit A (491 aa).

Catalysis depends on charge relay system residues K77 and S152. Catalysis depends on S176, which acts as the Acyl-ester intermediate.

The protein belongs to the amidase family. GatA subfamily. Heterotrimer of A, B and C subunits.

The catalysed reaction is L-glutamyl-tRNA(Gln) + L-glutamine + ATP + H2O = L-glutaminyl-tRNA(Gln) + L-glutamate + ADP + phosphate + H(+). Functionally, allows the formation of correctly charged Gln-tRNA(Gln) through the transamidation of misacylated Glu-tRNA(Gln) in organisms which lack glutaminyl-tRNA synthetase. The reaction takes place in the presence of glutamine and ATP through an activated gamma-phospho-Glu-tRNA(Gln). The polypeptide is Glutamyl-tRNA(Gln) amidotransferase subunit A (Chlamydia trachomatis serovar A (strain ATCC VR-571B / DSM 19440 / HAR-13)).